Here is a 70-residue protein sequence, read N- to C-terminus: Small ribosomal subunit protein bS18c (70 aa).

The protein belongs to the bacterial ribosomal protein bS18 family. Part of the 30S ribosomal subunit.

It is found in the plastid. It localises to the chloroplast. The sequence is that of Small ribosomal subunit protein bS18c from Gracilaria tenuistipitata var. liui (Red alga).